Here is a 230-residue protein sequence, read N- to C-terminus: Large ribosomal subunit protein uL1 (230 aa).

It belongs to the universal ribosomal protein uL1 family. Part of the 50S ribosomal subunit.

In terms of biological role, binds directly to 23S rRNA. The L1 stalk is quite mobile in the ribosome, and is involved in E site tRNA release. Its function is as follows. Protein L1 is also a translational repressor protein, it controls the translation of the L11 operon by binding to its mRNA. The polypeptide is Large ribosomal subunit protein uL1 (Chromohalobacter salexigens (strain ATCC BAA-138 / DSM 3043 / CIP 106854 / NCIMB 13768 / 1H11)).